A 272-amino-acid chain; its full sequence is Ribonuclease 3 (272 aa).

Residues 1-20 (MTDDVTNVEQPSTASEQQPQ) show a composition bias toward polar residues. The segment at 1–38 (MTDDVTNVEQPSTASEQQPQDVPAAEPSAAKKRRANKA) is disordered. The RNase III domain maps to 44 to 171 (AAAIEQRLGH…VIGAIYLDGG (128 aa)). Glutamate 84 is a binding site for Mg(2+). Residue aspartate 88 is part of the active site. Mg(2+)-binding residues include aspartate 157 and glutamate 160. Glutamate 160 is an active-site residue. The region spanning 196 to 265 (DPKTVLQEWA…ASAMLAREGV (70 aa)) is the DRBM domain.

The protein belongs to the ribonuclease III family. As to quaternary structure, homodimer. The cofactor is Mg(2+).

The protein localises to the cytoplasm. The enzyme catalyses Endonucleolytic cleavage to 5'-phosphomonoester.. Functionally, digests double-stranded RNA. Involved in the processing of primary rRNA transcript to yield the immediate precursors to the large and small rRNAs (23S and 16S). Processes some mRNAs, and tRNAs when they are encoded in the rRNA operon. Processes pre-crRNA and tracrRNA of type II CRISPR loci if present in the organism. The protein is Ribonuclease 3 of Rhodopseudomonas palustris (strain ATCC BAA-98 / CGA009).